The chain runs to 340 residues: Ribonucleoside-diphosphate reductase small subunit (340 aa).

The chain crosses the membrane as a helical span at residues 180-200; it reads FILMILIEGIFFAASFAAIAY.

The protein belongs to the ribonucleoside diphosphate reductase small chain family. In terms of assembly, heterotetramer composed of a homodimer of the large subunit (R1) and a homodimer of the small subunit (R2). Larger multisubunit protein complex are also active, composed of (R1)n(R2)n. Fe cation serves as cofactor.

The protein resides in the host membrane. It catalyses the reaction a 2'-deoxyribonucleoside 5'-diphosphate + [thioredoxin]-disulfide + H2O = a ribonucleoside 5'-diphosphate + [thioredoxin]-dithiol. Its function is as follows. Ribonucleoside-diphosphate reductase holoenzyme provides the precursors necessary for viral DNA synthesis. Allows virus growth in non-dividing cells, as well as reactivation from latency in infected hosts. Catalyzes the biosynthesis of deoxyribonucleotides from the corresponding ribonucleotides. This is Ribonucleoside-diphosphate reductase small subunit from Human herpesvirus 1 (strain 17) (HHV-1).